Consider the following 83-residue polypeptide: uncharacterized protein (83 aa).

Helical transmembrane passes span 23–43 (GGCY…SAIA) and 49–69 (SLWW…VVYG).

The protein resides in the cell membrane. This is an uncharacterized protein from Mycobacterium tuberculosis (strain CDC 1551 / Oshkosh).